The chain runs to 91 residues: Probable Fe(2+)-trafficking protein (91 aa).

It belongs to the Fe(2+)-trafficking protein family.

Could be a mediator in iron transactions between iron acquisition and iron-requiring processes, such as synthesis and/or repair of Fe-S clusters in biosynthetic enzymes. The chain is Probable Fe(2+)-trafficking protein from Burkholderia mallei (strain NCTC 10247).